We begin with the raw amino-acid sequence, 304 residues long: MSNVLELTIPASTANLGVGFDSIGMALDKFLHLSVKETSGTKWEYIFHDDASKQLPTDETNFIYHVAQQVAAKYSVDLPNLCIEMRSDIPLARGLGSSASALVGAIYIANYFGDIQLSKHEVLQLATEIEGHPDNVAPTIYGGLIAGYYNDVTKETSVAHIDIPDVDVIVTIPTYELKTEASRRALPQKLTHSEAVKSSAISNTMICALAQHNYELAGKLMQQDGFHEPYRQHLIAEFDEVKTIASQHNAYATVISGAGPTILIFSRKENSGELVRALNRNVVTCHSELVDINVSGVKERIVYQ.

90–100 (PLARGLGSSAS) provides a ligand contact to ATP.

This sequence belongs to the GHMP kinase family. Homoserine kinase subfamily.

It is found in the cytoplasm. The catalysed reaction is L-homoserine + ATP = O-phospho-L-homoserine + ADP + H(+). The protein operates within amino-acid biosynthesis; L-threonine biosynthesis; L-threonine from L-aspartate: step 4/5. Functionally, catalyzes the ATP-dependent phosphorylation of L-homoserine to L-homoserine phosphate. This Staphylococcus aureus (strain MRSA252) protein is Homoserine kinase.